The primary structure comprises 575 residues: RecBCD enzyme subunit RecD (575 aa).

Position 170–177 (170–177) interacts with ATP; that stretch reads GGPGTGKT.

This sequence belongs to the RecD family. Heterotrimer of RecB, RecC and RecD. All subunits contribute to DNA-binding.

The catalysed reaction is Couples ATP hydrolysis with the unwinding of duplex DNA at the replication fork by translocating in the 5'-3' direction. This creates two antiparallel DNA single strands (ssDNA). The leading ssDNA polymer is the template for DNA polymerase III holoenzyme which synthesizes a continuous strand.. It carries out the reaction ATP + H2O = ADP + phosphate + H(+). A helicase/nuclease that prepares dsDNA breaks (DSB) for recombinational DNA repair. Binds to DSBs and unwinds DNA via a highly rapid and processive ATP-dependent bidirectional helicase activity. Holoenzyme degrades any linearized DNA that is unable to undergo homologous recombination. In the holoenzyme this subunit has ssDNA-dependent ATPase and 5'-3' helicase activity. When added to pre-assembled RecBC greatly stimulates nuclease activity and augments holoenzyme processivity. Unlike the case in E.coli, suppresses RecA-dependent homologous recombination, is instead required for single-strand annealing pathway repair of DSB. In terms of biological role, a helicase/nuclease that prepares dsDNA breaks (DSB) for recombinational DNA repair. Binds to DSBs and unwinds DNA via a highly rapid and processive ATP-dependent bidirectional helicase activity. Unwinds dsDNA until it encounters a Chi (crossover hotspot instigator) sequence from the 3' direction. Cuts ssDNA a few nucleotides 3' to the Chi site. The properties and activities of the enzyme are changed at Chi. The Chi-altered holoenzyme produces a long 3'-ssDNA overhang and facilitates RecA-binding to the ssDNA for homologous DNA recombination and repair. Holoenzyme degrades any linearized DNA that is unable to undergo homologous recombination. In the holoenzyme this subunit has ssDNA-dependent ATPase and 5'-3' helicase activity. When added to pre-assembled RecBC greatly stimulates nuclease activity and augments holoenzyme processivity. Negatively regulates the RecA-loading ability of RecBCD. In Mycobacterium tuberculosis (strain CDC 1551 / Oshkosh), this protein is RecBCD enzyme subunit RecD.